Consider the following 345-residue polypeptide: S-adenosylmethionine:tRNA ribosyltransferase-isomerase (345 aa).

Belongs to the QueA family. In terms of assembly, monomer.

The protein localises to the cytoplasm. The enzyme catalyses 7-aminomethyl-7-carbaguanosine(34) in tRNA + S-adenosyl-L-methionine = epoxyqueuosine(34) in tRNA + adenine + L-methionine + 2 H(+). Its pathway is tRNA modification; tRNA-queuosine biosynthesis. Transfers and isomerizes the ribose moiety from AdoMet to the 7-aminomethyl group of 7-deazaguanine (preQ1-tRNA) to give epoxyqueuosine (oQ-tRNA). This Shewanella halifaxensis (strain HAW-EB4) protein is S-adenosylmethionine:tRNA ribosyltransferase-isomerase.